The sequence spans 469 residues: Adenosylhomocysteinase (469 aa).

Substrate is bound by residues threonine 60, aspartate 135, and glutamate 195. Residue 196–198 (TTT) participates in NAD(+) binding. Substrate is bound by residues lysine 225 and aspartate 229. Residues asparagine 230, 259–264 (GYGDVG), glutamate 282, asparagine 317, 338–340 (IGH), and asparagine 383 each bind NAD(+).

It belongs to the adenosylhomocysteinase family. Requires NAD(+) as cofactor.

Its subcellular location is the cytoplasm. It catalyses the reaction S-adenosyl-L-homocysteine + H2O = L-homocysteine + adenosine. Its pathway is amino-acid biosynthesis; L-homocysteine biosynthesis; L-homocysteine from S-adenosyl-L-homocysteine: step 1/1. Its function is as follows. May play a key role in the regulation of the intracellular concentration of adenosylhomocysteine. This Maricaulis maris (strain MCS10) (Caulobacter maris) protein is Adenosylhomocysteinase.